Consider the following 537-residue polypeptide: Mitochondria-eating protein (537 aa).

The interval 1–270 (MAESLKKLAK…SHSRSRSHSR (270 aa)) is interaction with YWHAG/14-3-3 protein gamma. A phosphoserine mark is found at Ser-13, Ser-85, Ser-123, Ser-127, Ser-154, and Ser-157. The segment at 109–150 (SKNRDNSPDQDQHQSDNESFSETQPTQVQDDLAESGKSLEGA) is disordered. Residues 110–124 (KNRDNSPDQDQHQSD) show a composition bias toward basic and acidic residues. Over residues 125 to 137 (NESFSETQPTQVQ) the composition is skewed to polar residues. Coiled coils occupy residues 152 to 184 (NGST…ARHK) and 210 to 243 (QDVV…RSAR). Disordered stretches follow at residues 171–212 (QLKS…PQDV) and 233–291 (EKSG…RAKM). Residues 179-209 (EDARHKTSENRRSEALKSDHRSTKRTQDQRP) are compositionally biased toward basic and acidic residues. A compositionally biased stretch (low complexity) spans 239–251 (GRSARSPSPSTGT). Basic residues predominate over residues 252–269 (RSHRRGRSRSHSRSRSHS). Phosphoserine occurs at positions 283, 285, and 508.

Belongs to the MIEAP family. Interacts (via coiled-coil domains) with BNIP3L (via BH3 domain). Interacts (via coiled-coil domains) with BNIP3 (via BH3 domain). Interacts with YWHAG/14-3-3 protein gamma; a protein that also plays a role in MALM. In terms of tissue distribution, in testis, expressed primarily in spermatids.

Its subcellular location is the cytoplasm. It is found in the cytosol. The protein resides in the mitochondrion outer membrane. It localises to the mitochondrion matrix. In terms of biological role, key regulator of mitochondrial quality that mediates the repairing or degradation of unhealthy mitochondria in response to mitochondrial damage. Mediator of mitochondrial protein catabolic process (also named MALM) by mediating the degradation of damaged proteins inside mitochondria by promoting the accumulation in the mitochondrial matrix of hydrolases that are characteristic of the lysosomal lumen. Also involved in mitochondrion degradation of damaged mitochondria by promoting the formation of vacuole-like structures (named MIV), which engulf and degrade unhealthy mitochondria by accumulating lysosomes. The physical interaction of SPATA18/MIEAP, BNIP3 and BNIP3L/NIX at the mitochondrial outer membrane regulates the opening of a pore in the mitochondrial double membrane in order to mediate the translocation of lysosomal proteins from the cytoplasm to the mitochondrial matrix. Binds cardiolipin. May form molecular condensates (non-membrane-bounded organelles) within mitochondria that compartmentalize and promote cardiolipin metabolism. The sequence is that of Mitochondria-eating protein (Spata18) from Mus musculus (Mouse).